Here is a 170-residue protein sequence, read N- to C-terminus: Photosystem II extrinsic protein V (170 aa).

A signal peptide spans 1–34 (MNKILGIDPLKKFIFGISAFVLLFWQLNVGAANA). Cys-70, Cys-73, His-74, and His-125 together coordinate heme c.

It belongs to the cytochrome c family. PsbV subfamily. PSII is composed of 1 copy each of membrane proteins PsbA, PsbB, PsbC, PsbD, PsbE, PsbF, PsbH, PsbI, PsbJ, PsbK, PsbL, PsbM, PsbT, PsbX, PsbY, PsbZ, Psb30/Ycf12, peripheral proteins PsbO, CyanoQ (PsbQ), PsbU, PsbV and a large number of cofactors. It forms dimeric complexes. The cofactor is heme c.

It is found in the cellular thylakoid membrane. Its function is as follows. One of the extrinsic, lumenal subunits of photosystem II (PSII). PSII is a light-driven water plastoquinone oxidoreductase, using light energy to abstract electrons from H(2)O, generating a proton gradient subsequently used for ATP formation. The extrinsic proteins stabilize the structure of photosystem II oxygen-evolving complex (OEC), the ion environment of oxygen evolution and protect the OEC against heat-induced inactivation. Low-potential cytochrome c that plays a role in the OEC of PSII. This Picosynechococcus sp. (strain ATCC 27264 / PCC 7002 / PR-6) (Agmenellum quadruplicatum) protein is Photosystem II extrinsic protein V.